The following is a 649-amino-acid chain: DNA ligase (649 aa).

Residues 62-66 (DSTYD) and 104-105 (ST) each bind NAD(+). K142 serves as the catalytic N6-AMP-lysine intermediate. NAD(+)-binding residues include R158, E189, and K301. Residues C389, C392, C405, and C411 each contribute to the Zn(2+) site. The BRCT domain maps to 569 to 649 (PGETPVFGKI…LDYLALISTY (81 aa)).

Belongs to the NAD-dependent DNA ligase family. LigA subfamily. It depends on Mg(2+) as a cofactor. Mn(2+) serves as cofactor.

It carries out the reaction NAD(+) + (deoxyribonucleotide)n-3'-hydroxyl + 5'-phospho-(deoxyribonucleotide)m = (deoxyribonucleotide)n+m + AMP + beta-nicotinamide D-nucleotide.. Functionally, DNA ligase that catalyzes the formation of phosphodiester linkages between 5'-phosphoryl and 3'-hydroxyl groups in double-stranded DNA using NAD as a coenzyme and as the energy source for the reaction. It is essential for DNA replication and repair of damaged DNA. This chain is DNA ligase, found in Psychromonas ingrahamii (strain DSM 17664 / CCUG 51855 / 37).